The sequence spans 343 residues: Phosphate acyltransferase (343 aa).

It belongs to the PlsX family. As to quaternary structure, homodimer. Probably interacts with PlsY.

It is found in the cytoplasm. The catalysed reaction is a fatty acyl-[ACP] + phosphate = an acyl phosphate + holo-[ACP]. It functions in the pathway lipid metabolism; phospholipid metabolism. Its function is as follows. Catalyzes the reversible formation of acyl-phosphate (acyl-PO(4)) from acyl-[acyl-carrier-protein] (acyl-ACP). This enzyme utilizes acyl-ACP as fatty acyl donor, but not acyl-CoA. This is Phosphate acyltransferase from Halorhodospira halophila (strain DSM 244 / SL1) (Ectothiorhodospira halophila (strain DSM 244 / SL1)).